The sequence spans 100 residues: MHLTPRESEKLLLHLAGELAAKRKARGLKLNYPETIAYISSHLLEAARDGKSVAELMNYGATLLTRDDVMEGIAEMIHDVQIEATFPDGTKLVTVHSPIR.

This sequence belongs to the urease gamma subunit family. As to quaternary structure, heterotrimer of UreA (gamma), UreB (beta) and UreC (alpha) subunits. Three heterotrimers associate to form the active enzyme.

The protein resides in the cytoplasm. It carries out the reaction urea + 2 H2O + H(+) = hydrogencarbonate + 2 NH4(+). Its pathway is nitrogen metabolism; urea degradation; CO(2) and NH(3) from urea (urease route): step 1/1. The protein is Urease subunit gamma of Flavobacterium johnsoniae (strain ATCC 17061 / DSM 2064 / JCM 8514 / BCRC 14874 / CCUG 350202 / NBRC 14942 / NCIMB 11054 / UW101) (Cytophaga johnsonae).